The chain runs to 532 residues: Collagen alpha-1(XXIII) chain (532 aa).

Residues 1–23 are Cytoplasmic-facing; the sequence is MGAGERAAGGGGAQDPGAGCGSR. The chain crosses the membrane as a helical; Signal-anchor for type II membrane protein span at residues 24-45; the sequence is ALSALCLLLSVGSAAACLLLGA. The Extracellular portion of the chain corresponds to 46 to 532; it reads QAAALHGRVA…GLPVPGCWHK (487 aa). 2 disordered regions span residues 102 to 296 and 308 to 532; these read PSEC…GEQG and LDAL…CWHK. Collagen-like domains lie at 108-166, 173-232, 240-298, and 313-372; these read PPGP…RGAQ, GPPG…PGKK, QPGL…QGDT, and GPPG…MGLS. Positions 129–145 are enriched in low complexity; it reads QSGRDGYPGPLGLDGKP. Positions 174 to 184 are enriched in pro residues; it reads PPGPPGPPGAR. Over residues 196–207 the composition is skewed to low complexity; it reads RGAQGPAGPRGE. Residues 314–326 show a composition bias toward pro residues; the sequence is PPGPQGAPGPPGI. Basic and acidic residues-rich tracts occupy residues 342 to 354 and 380 to 393; these read DGEKGPKGPKGDP and PKGEKGESASDHLQ. The span at 403–414 shows a compositional bias: pro residues; it reads PGPPGPPGPPGP. Collagen-like domains are found at residues 404–452 and 455–514; these read GPPG…GPPG and GLPG…PGLD. 2 stretches are compositionally biased toward basic and acidic residues: residues 427–441 and 478–495; these read DGAKGEKGTSGERGP and RGEKGDRSERGEKGERGV.

Homotrimer. Post-translationally, undergoes proteolytic cleavage by furin protease to yield a 60 kDa soluble form that forms a homotrimer and exhibits a low affinity interaction with heparin.

The protein resides in the cell membrane. The sequence is that of Collagen alpha-1(XXIII) chain (Col23a1) from Mus musculus (Mouse).